The following is a 268-amino-acid chain: Zinc import ATP-binding protein ZnuC (268 aa).

Positions isoleucine 16–glutamine 231 constitute an ABC transporter domain. Glycine 48–serine 55 contacts ATP.

The protein belongs to the ABC transporter superfamily. Zinc importer (TC 3.A.1.15.5) family. The complex is composed of two ATP-binding proteins (ZnuC), two transmembrane proteins (ZnuB) and a solute-binding protein (ZnuA).

The protein resides in the cell inner membrane. It carries out the reaction Zn(2+)(out) + ATP(in) + H2O(in) = Zn(2+)(in) + ADP(in) + phosphate(in) + H(+)(in). Functionally, part of the ABC transporter complex ZnuABC involved in zinc import. Responsible for energy coupling to the transport system. This Haemophilus influenzae (strain ATCC 51907 / DSM 11121 / KW20 / Rd) protein is Zinc import ATP-binding protein ZnuC.